The sequence spans 383 residues: Mannan endo-1,4-beta-mannosidase A (383 aa).

An N-terminal signal peptide occupies residues 1–18 (MKFSQALLSLASLALAAA). Residue Asn-75 is glycosylated (N-linked (GlcNAc...) asparagine). Trp-97 contacts substrate. Asn-199 is a glycosylation site (N-linked (GlcNAc...) asparagine). Substrate contacts are provided by residues Asn-210 and 211-213 (EPR). Glu-211 serves as the catalytic Proton donor/acceptor. A disulfide bridge links Cys-214 with Cys-217. Substrate is bound by residues Tyr-279 and Trp-283. A disulfide bond links Cys-301 and Cys-308. The active-site Nucleophile is Glu-312. Cys-320 and Cys-369 are joined by a disulfide. N-linked (GlcNAc...) asparagine glycosylation occurs at Asn-332. Substrate is bound at residue Trp-342.

The protein belongs to the glycosyl hydrolase 5 (cellulase A) family. As to quaternary structure, monomer.

It localises to the secreted. The catalysed reaction is Random hydrolysis of (1-&gt;4)-beta-D-mannosidic linkages in mannans, galactomannans and glucomannans.. Functionally, endo-1,4-mannanase that catalyzes the random hydrolysis of (1-&gt;4)-beta-D-mannosidic linkages in mannans and heteromannans. It is a crucial enzyme for depolymerization of seed galactomannans and wood galactoglucomannans. Active against locust bean gum and gum guar. Also has transglycosylation activity. This is Mannan endo-1,4-beta-mannosidase A (manA) from Emericella nidulans (strain FGSC A4 / ATCC 38163 / CBS 112.46 / NRRL 194 / M139) (Aspergillus nidulans).